A 395-amino-acid chain; its full sequence is FAD-dependent monooxygenase cctM (395 aa).

Residues 1–23 (MEPGTDVRRVLVIGAGAAGLLIA) form the signal peptide. Positions 37, 52, and 112 each coordinate FAD. N-linked (GlcNAc...) asparagine glycosylation is found at asparagine 138 and asparagine 298. Residue aspartate 306 participates in FAD binding.

This sequence belongs to the paxM FAD-dependent monooxygenase family. Requires FAD as cofactor.

The protein operates within mycotoxin biosynthesis. Its function is as follows. FAD-dependent monooxygenase; part of the gene cluster that mediates the biosynthesis of the mycotoxin cyclochlorotine, a hepatotoxic and carcinogenic cyclic chlorinated pentapeptide. The function of cctM within the pathway, if any, remains undetermined. The NRPS cctN initially catalyzes the condensation of L-serine (Ser), Pro, L-2-aminobutyrate (2Abu), Ser, and beta-Phe in this order to produce isocyclotine. After the dichlorination of Pro2 catalyzed by cctP2 to produce isocyclochlorotine, the cctO-mediated transacylation of isocyclochlorotine can furnish cyclochlorotine. The subsequent hydroxylation of cyclochlorotine by cctR yields hydroxycyclochlorotine as the final product. CctP1 probably acts as a phenylalanine aminomutase and provides the uncommon building block beta-Phe. Furthermore, 2Abu can be synthesized from threonine by one of the threonine dehydratases and transaminases localized outside of the cluster. The functions of the remaining proteins encoded by the cluster, cctM and cctT, have not been identified yet. This is FAD-dependent monooxygenase cctM from Talaromyces islandicus (Penicillium islandicum).